A 582-amino-acid polypeptide reads, in one-letter code: Semenogelin-2 (582 aa).

The first 23 residues, 1 to 23 (MKSIILFVLSLLLILEKQAAVMG), serve as a signal peptide directing secretion. The tract at residues 24–59 (QKGGSKGQLPSGSSQFPHGQKGQHYFGQKDQQHTKS) is disordered. Positions 31-40 (QLPSGSSQFP) are enriched in polar residues. 3 consecutive repeat copies span residues 70 to 129 (HVDI…IVIH), 141 to 200 (NPSQ…QTEE), and 201 to 260 (LVVN…QDEL). The repeat-rich region stretch occupies residues 70-559 (HVDINDHDWT…SSESHNIVIT (490 aa)). Disordered stretches follow at residues 132 to 160 (GGQA…SQCS), 173 to 194 (KEQA…QSSY), 228 to 248 (EEHS…RLQH), and 269 to 582 (QTKN…PIST). Composition is skewed to polar residues over residues 137–160 (HGTQ…SQCS) and 174–194 (EQAS…QSSY). Positions 261 to 500 (LVYNKNQHQT…QSSISFQIEK (240 aa)) are 4 X 60 AA tandem repeats, type I. Asparagine 272 is a glycosylation site (N-linked (GlcNAc...) asparagine). The span at 292-310 (RTEERQLHHGEKSVQKDVS) shows a compositional bias: basic and acidic residues. Residues 325–334 (KSQNQVTIHS) are compositionally biased toward polar residues. Over residues 335–345 (QDQEHGHKENK) the composition is skewed to basic and acidic residues. The span at 372–397 (GSISIQTEEQIHGKSQNQVRIPSQAQ) shows a compositional bias: polar residues. Residues 413–426 (TEERRLNSGEKDVQ) are compositionally biased toward basic and acidic residues. The segment covering 445-455 (KSQNQVTIPSQ) has biased composition (polar residues). The span at 456–465 (DQEHGHKENK) shows a compositional bias: basic and acidic residues. Polar residues-rich tracts occupy residues 482 to 496 (GKST…SISF) and 506 to 532 (SQIQ…QSAD). A 3-2 repeat occupies 501–559 (LVEGKSQIQTPNPNQDQWSGQNAKGKSGQSADSKQDLLSHEQKGRYKQESSESHNIVIT). Basic and acidic residues-rich tracts occupy residues 533-552 (SKQD…ESSE) and 559-582 (TEHE…PIST).

Belongs to the semenogelin family. As to quaternary structure, interacts with SERPINA5. Semenogelin-2 is thought to form both the 71 kDa polypeptide and, in its glycosylated form, the 76 kDa polypeptide. As to expression, seminal vesicles, and to a much lesser extent, epididymis.

It is found in the secreted. In terms of biological role, participates in the formation of a gel matrix (sperm coagulum) entrapping the accessory gland secretions and ejaculated spermatozoa. The sequence is that of Semenogelin-2 (SEMG2) from Homo sapiens (Human).